The chain runs to 180 residues: Protein YOP1 (180 aa).

At 1 to 35 the chain is on the cytoplasmic side; the sequence is MADYLKLFQDSLKGLDTKFAGNQILSRIEAQTKLP. A helical membrane pass occupies residues 36-55; it reads RSYVIVGLVAVYFLLIFINV. Topologically, residues 56-57 are lumenal; it reads GG. A helical membrane pass occupies residues 58–78; sequence IGEILSNFVGFCIPTYYSLKA. Residues 79-88 are Cytoplasmic-facing; it reads LKTATSTDDT. The chain crosses the membrane as a helical span at residues 89 to 105; that stretch reads QLLTYWIVFSFLSVIEF. Residues 106 to 108 lie on the Lumenal side of the membrane; that stretch reads WSK. The chain crosses the membrane as a helical span at residues 109–127; that stretch reads AILYWVPFYWFFKTVFLLY. Over 128–180 the chain is Cytoplasmic; that stretch reads IAIPSFGGAQLVYTRLISPFSDKYLPIVEGKSGELAQKVEAAANNAKASGYSR.

This sequence belongs to the DP1 family. In terms of assembly, oligomer.

The protein localises to the endoplasmic reticulum membrane. Its subcellular location is the golgi apparatus membrane. In terms of biological role, required to generate and maintain the structure of the tubular endoplasmic reticulum network and the vacuole. Induces high curvature in membranes and causes membrane tubule formation. Involved in membrane/vesicle trafficking. This Kluyveromyces lactis (strain ATCC 8585 / CBS 2359 / DSM 70799 / NBRC 1267 / NRRL Y-1140 / WM37) (Yeast) protein is Protein YOP1 (YOP1).